Reading from the N-terminus, the 279-residue chain is Gas vesicle protein L2 (279 aa).

It belongs to the gas vesicle GvpF/GvpL family. GvpF to GvpM interact with each other in vitro, and may form multi-subunit complex(es). Interacts with GvpC, GvpN and GvpO.

It localises to the gas vesicle. Functionally, proteins GvpF to GvpM might be involved in nucleating gas vesicle formation. A minor component of the gas vesicle. Gas vesicles are hollow, gas filled proteinaceous nanostructures found in several microbial planktonic microorganisms. They allow positioning of halobacteria at the optimal depth for growth in the poorly aerated, shallow brine pools of their habitat. Its function is as follows. Expression of 2 c-vac DNA fragments containing 2 divergently transcribed regions (gvpE-gvpF-gvpG-gvpH-gvpI-gvpJ-gvpK-gvpL-gvpM and gvpA-gvpC-gvpN-gvpO) allows H.volcanii to produce gas vesicles. The protein is Gas vesicle protein L2 of Halobacterium salinarum (strain ATCC 700922 / JCM 11081 / NRC-1) (Halobacterium halobium).